The following is a 337-amino-acid chain: MKVLGIETSCDDTGIAIYDVSKGLLINELHSQKKIHANYGGIIPELASREHTRKIIFLLDKIFKEKNIMKEIDLIAYTAGPGLAGSLLVGATFACSLGFSLNIPVLPVNHMEAHLLSPMLEYKSMQFPFIALLVSGKHTQIIAAYELGKYEILGNSLDDAAGEAFDKVSKMLGLKYPSGRELSSLAAQGIKNYFYFPRPMIHHSSLNFSFSGLKTFTSKVISNNTLNIQQKANIARAFEDAVIDVLLIKTKKALYKKGWKRLVIAGGVSANTVLRKRSKDMMENVFHGKVFYSSLKFCTDNGAMIAYLGSLRYKEASVSQLEIIVKPKWSIDKLSYI.

2 residues coordinate Fe cation: His-110 and His-114. Substrate-binding positions include 133 to 137 (LVSGK), Asp-166, Gly-179, and Asn-271. Asp-300 contributes to the Fe cation binding site.

Belongs to the KAE1 / TsaD family. Requires Fe(2+) as cofactor.

It localises to the cytoplasm. It catalyses the reaction L-threonylcarbamoyladenylate + adenosine(37) in tRNA = N(6)-L-threonylcarbamoyladenosine(37) in tRNA + AMP + H(+). Required for the formation of a threonylcarbamoyl group on adenosine at position 37 (t(6)A37) in tRNAs that read codons beginning with adenine. Is involved in the transfer of the threonylcarbamoyl moiety of threonylcarbamoyl-AMP (TC-AMP) to the N6 group of A37, together with TsaE and TsaB. TsaD likely plays a direct catalytic role in this reaction. The sequence is that of tRNA N6-adenosine threonylcarbamoyltransferase from Buchnera aphidicola subsp. Schizaphis graminum (strain Sg).